The chain runs to 144 residues: Transcription antitermination protein NusB (144 aa).

This sequence belongs to the NusB family.

Its function is as follows. Involved in transcription antitermination. Required for transcription of ribosomal RNA (rRNA) genes. Binds specifically to the boxA antiterminator sequence of the ribosomal RNA (rrn) operons. This chain is Transcription antitermination protein NusB, found in Streptomyces avermitilis (strain ATCC 31267 / DSM 46492 / JCM 5070 / NBRC 14893 / NCIMB 12804 / NRRL 8165 / MA-4680).